Reading from the N-terminus, the 475-residue chain is MSPQTETKASVGFKAGVKDYKLTYYTPDYETKDTDILAAFRVTPQPGVPPEEAGAAVAAESSTGTWTTVWTDGLTSLDRYKGRCYGLEPVAGEENQYIAYVAYPLDLFEEGSVTNMFTSIVGNVFGFKALRALRLEDLRIPTAYIKTFQGPPHGIQVERDKLNKYGRPLLGCTIKPKLGLSAKNYGRAVYECLRGGLDFTKDDENVNSQPFMRWRDRFLFCAEAIFKSQAETGEIKGHYLNATAGTCEEMMKRAVFARELGVPIVMHDYLTGGFTANTSLAHYCRDNGLLLHIHRAMHAVIDRQKNHGMHFRVLAKALRLSGGDHVHAGTVVGKLEGEREITLGFVDLLRDDFVEKDRSRGIYFTQDWVSLPGVLPVASGGIHVWHMPALTEIFGDDSVLQFGGGTLGHPWGNAPGAVANRVALEACVQARNEGRDLAREGNEIIREASKWSPELAAACEVWKEIKFEFEAMDTL.

The propeptide occupies 1-2 (MS). N-acetylproline is present on Pro-3. An N6,N6,N6-trimethyllysine modification is found at Lys-14. Positions 123 and 173 each coordinate substrate. Residue Lys-175 is the Proton acceptor of the active site. Lys-177 contacts substrate. Residues Lys-201, Asp-203, and Glu-204 each coordinate Mg(2+). Lys-201 carries the N6-carboxylysine modification. Residue His-294 is the Proton acceptor of the active site. Substrate is bound by residues Arg-295, His-327, and Ser-379.

It belongs to the RuBisCO large chain family. Type I subfamily. In terms of assembly, heterohexadecamer of 8 large chains and 8 small chains; disulfide-linked. The disulfide link is formed within the large subunit homodimers. Mg(2+) is required as a cofactor. The disulfide bond which can form in the large chain dimeric partners within the hexadecamer appears to be associated with oxidative stress and protein turnover.

It localises to the plastid. The protein resides in the chloroplast. The catalysed reaction is 2 (2R)-3-phosphoglycerate + 2 H(+) = D-ribulose 1,5-bisphosphate + CO2 + H2O. It catalyses the reaction D-ribulose 1,5-bisphosphate + O2 = 2-phosphoglycolate + (2R)-3-phosphoglycerate + 2 H(+). RuBisCO catalyzes two reactions: the carboxylation of D-ribulose 1,5-bisphosphate, the primary event in carbon dioxide fixation, as well as the oxidative fragmentation of the pentose substrate in the photorespiration process. Both reactions occur simultaneously and in competition at the same active site. The chain is Ribulose bisphosphate carboxylase large chain (rbcL) from Glycine max (Soybean).